The sequence spans 224 residues: Thiamine-phosphate synthase (224 aa).

4-amino-2-methyl-5-(diphosphooxymethyl)pyrimidine is bound by residues 41–45 (QFRDK) and aspartate 77. Aspartate 78 and aspartate 97 together coordinate Mg(2+). Serine 116 is a 4-amino-2-methyl-5-(diphosphooxymethyl)pyrimidine binding site. Residue 143-145 (TNS) participates in 2-[(2R,5Z)-2-carboxy-4-methylthiazol-5(2H)-ylidene]ethyl phosphate binding. Lysine 146 serves as a coordination point for 4-amino-2-methyl-5-(diphosphooxymethyl)pyrimidine. 2-[(2R,5Z)-2-carboxy-4-methylthiazol-5(2H)-ylidene]ethyl phosphate contacts are provided by residues glycine 174 and 194 to 195 (IS).

It belongs to the thiamine-phosphate synthase family. The cofactor is Mg(2+).

It carries out the reaction 2-[(2R,5Z)-2-carboxy-4-methylthiazol-5(2H)-ylidene]ethyl phosphate + 4-amino-2-methyl-5-(diphosphooxymethyl)pyrimidine + 2 H(+) = thiamine phosphate + CO2 + diphosphate. The enzyme catalyses 2-(2-carboxy-4-methylthiazol-5-yl)ethyl phosphate + 4-amino-2-methyl-5-(diphosphooxymethyl)pyrimidine + 2 H(+) = thiamine phosphate + CO2 + diphosphate. The catalysed reaction is 4-methyl-5-(2-phosphooxyethyl)-thiazole + 4-amino-2-methyl-5-(diphosphooxymethyl)pyrimidine + H(+) = thiamine phosphate + diphosphate. The protein operates within cofactor biosynthesis; thiamine diphosphate biosynthesis; thiamine phosphate from 4-amino-2-methyl-5-diphosphomethylpyrimidine and 4-methyl-5-(2-phosphoethyl)-thiazole: step 1/1. In terms of biological role, condenses 4-methyl-5-(beta-hydroxyethyl)thiazole monophosphate (THZ-P) and 2-methyl-4-amino-5-hydroxymethyl pyrimidine pyrophosphate (HMP-PP) to form thiamine monophosphate (TMP). This chain is Thiamine-phosphate synthase, found in Latilactobacillus sakei subsp. sakei (strain 23K) (Lactobacillus sakei subsp. sakei).